A 456-amino-acid chain; its full sequence is MASRSLGGLSGIRGGGGGGGKKSLSARNAAVERRNLITVCRFSVKTLIDRSCFETIDDSSPEFNNFAAILEQILSHRLKGQVTWFGYESPRSFWDYIRVACRKVSQNCICSIENMENVSSSRAKGRAWIRVALMEKHLSEYISTALRDFKTTRRFYEDGAIVLGEEANMLAGMLLGLNAIDFSFCLKGEGLDGSFPAVIDYTPYLKYIQGSDSISSDEEELRTLGSSGSESSTPENVGPPFLMDENSWFNKCKRVKQKYQLTLEQKGYLEELLRLRENQLSESVSQNKILLQRIEDSDLAHKLEKEQLEYIIVELQDQLTVLKNNDLRSRQELTAHLTNQWPSPGALDVNAVALDTLLYRKHNKQWYEKSYQSLDQLSAEVSLSQTSLDPGQSQEGDGKQDTLNVMSEGKEDTPSLLGLCGSLTSVASYKSLTSLKSNDYLASPTTEMTSPGLTPS.

A disordered region spans residues 1–24 (MASRSLGGLSGIRGGGGGGGKKSL). The segment covering 8–21 (GLSGIRGGGGGGGK) has biased composition (gly residues). Position 13 is an omega-N-methylarginine (Arg13). An RUN domain is found at 57–189 (DDSSPEFNNF…IDFSFCLKGE (133 aa)). Phosphoserine occurs at positions 215 and 216. Positions 216 to 237 (SDEEELRTLGSSGSESSTPENV) are disordered. Over residues 224–235 (LGSSGSESSTPE) the composition is skewed to polar residues. A coiled-coil region spans residues 300-325 (AHKLEKEQLEYIIVELQDQLTVLKNN). Polar residues predominate over residues 382-405 (SLSQTSLDPGQSQEGDGKQDTLNV). The segment at 382–411 (SLSQTSLDPGQSQEGDGKQDTLNVMSEGKE) is disordered.

This sequence belongs to the RUNDC3 family. In terms of assembly, interacts with RAP2A.

The protein is RUN domain-containing protein 3B (RUNDC3B) of Pongo abelii (Sumatran orangutan).